The primary structure comprises 870 residues: LPS-assembly protein LptD (870 aa).

Positions 1–25 (MKQGKSFIFYCLVLLLCGFQQLSSA) are cleaved as a signal peptide.

It belongs to the LptD family. As to quaternary structure, component of the lipopolysaccharide transport and assembly complex. Interacts with LptE and LptA.

The protein resides in the cell outer membrane. Functionally, together with LptE, is involved in the assembly of lipopolysaccharide (LPS) at the surface of the outer membrane. The chain is LPS-assembly protein LptD from Coxiella burnetii (strain RSA 493 / Nine Mile phase I).